The sequence spans 934 residues: Isoleucine--tRNA ligase (934 aa).

A 'HIGH' region motif is present at residues 58-68 (PYANGEIHIGH). L-isoleucyl-5'-AMP is bound at residue glutamate 559. The 'KMSKS' region signature appears at 600-604 (KMSKS). Lysine 603 is a binding site for ATP. Zn(2+) contacts are provided by cysteine 897, cysteine 900, cysteine 917, and cysteine 920.

It belongs to the class-I aminoacyl-tRNA synthetase family. IleS type 1 subfamily. Monomer. Zn(2+) serves as cofactor.

It localises to the cytoplasm. The enzyme catalyses tRNA(Ile) + L-isoleucine + ATP = L-isoleucyl-tRNA(Ile) + AMP + diphosphate. In terms of biological role, catalyzes the attachment of isoleucine to tRNA(Ile). As IleRS can inadvertently accommodate and process structurally similar amino acids such as valine, to avoid such errors it has two additional distinct tRNA(Ile)-dependent editing activities. One activity is designated as 'pretransfer' editing and involves the hydrolysis of activated Val-AMP. The other activity is designated 'posttransfer' editing and involves deacylation of mischarged Val-tRNA(Ile). This chain is Isoleucine--tRNA ligase, found in Teredinibacter turnerae (strain ATCC 39867 / T7901).